The following is a 243-amino-acid chain: Leucyl/phenylalanyl-tRNA--protein transferase (243 aa).

It belongs to the L/F-transferase family.

The protein resides in the cytoplasm. It catalyses the reaction N-terminal L-lysyl-[protein] + L-leucyl-tRNA(Leu) = N-terminal L-leucyl-L-lysyl-[protein] + tRNA(Leu) + H(+). The catalysed reaction is N-terminal L-arginyl-[protein] + L-leucyl-tRNA(Leu) = N-terminal L-leucyl-L-arginyl-[protein] + tRNA(Leu) + H(+). The enzyme catalyses L-phenylalanyl-tRNA(Phe) + an N-terminal L-alpha-aminoacyl-[protein] = an N-terminal L-phenylalanyl-L-alpha-aminoacyl-[protein] + tRNA(Phe). Functionally, functions in the N-end rule pathway of protein degradation where it conjugates Leu, Phe and, less efficiently, Met from aminoacyl-tRNAs to the N-termini of proteins containing an N-terminal arginine or lysine. In Xylella fastidiosa (strain 9a5c), this protein is Leucyl/phenylalanyl-tRNA--protein transferase.